The chain runs to 240 residues: Uridylate kinase (240 aa).

12 to 15 is a binding site for ATP; that stretch reads KLSG. Gly54 lines the UMP pocket. ATP is bound by residues Gly55 and Arg59. UMP is bound by residues Asp74 and 135 to 142; that span reads TGNPFFTT. Residues Thr162, Tyr168, and Asp171 each coordinate ATP.

This sequence belongs to the UMP kinase family. In terms of assembly, homohexamer.

The protein localises to the cytoplasm. The enzyme catalyses UMP + ATP = UDP + ADP. It functions in the pathway pyrimidine metabolism; CTP biosynthesis via de novo pathway; UDP from UMP (UMPK route): step 1/1. Its activity is regulated as follows. Inhibited by UTP. Its function is as follows. Catalyzes the reversible phosphorylation of UMP to UDP. This is Uridylate kinase from Xanthomonas axonopodis pv. citri (strain 306).